Here is a 348-residue protein sequence, read N- to C-terminus: Nicotinate-nucleotide--dimethylbenzimidazole phosphoribosyltransferase (348 aa).

Catalysis depends on E316, which acts as the Proton acceptor.

Belongs to the CobT family.

The enzyme catalyses 5,6-dimethylbenzimidazole + nicotinate beta-D-ribonucleotide = alpha-ribazole 5'-phosphate + nicotinate + H(+). The protein operates within nucleoside biosynthesis; alpha-ribazole biosynthesis; alpha-ribazole from 5,6-dimethylbenzimidazole: step 1/2. Its function is as follows. Catalyzes the synthesis of alpha-ribazole-5'-phosphate from nicotinate mononucleotide (NAMN) and 5,6-dimethylbenzimidazole (DMB). The polypeptide is Nicotinate-nucleotide--dimethylbenzimidazole phosphoribosyltransferase (Xanthomonas oryzae pv. oryzae (strain PXO99A)).